The chain runs to 331 residues: Pyruvate synthase subunit PorB (331 aa).

4 residues coordinate [4Fe-4S] cluster: C21, C24, C59, and C222.

Heterotetramer of one alpha, one beta, one delta and one gamma chain. Requires [4Fe-4S] cluster as cofactor.

It carries out the reaction 2 oxidized [2Fe-2S]-[ferredoxin] + pyruvate + CoA = 2 reduced [2Fe-2S]-[ferredoxin] + acetyl-CoA + CO2 + H(+). The chain is Pyruvate synthase subunit PorB (porB) from Pyrococcus furiosus (strain ATCC 43587 / DSM 3638 / JCM 8422 / Vc1).